The chain runs to 761 residues: 5-methyltetrahydropteroyltriglutamate--homocysteine methyltransferase (761 aa).

Residues arginine 16–lysine 19 and lysine 116 contribute to the 5-methyltetrahydropteroyltri-L-glutamate site. L-homocysteine is bound by residues isoleucine 435–serine 437 and glutamate 488. L-methionine-binding positions include isoleucine 435–serine 437 and glutamate 488. Residues arginine 519–cysteine 520 and tryptophan 565 each bind 5-methyltetrahydropteroyltri-L-glutamate. Aspartate 603 serves as a coordination point for L-homocysteine. Residue aspartate 603 coordinates L-methionine. Glutamate 609 is a binding site for 5-methyltetrahydropteroyltri-L-glutamate. Positions 645, 647, and 669 each coordinate Zn(2+). Residue histidine 698 is the Proton donor of the active site. Cysteine 730 is a Zn(2+) binding site.

The protein belongs to the vitamin-B12 independent methionine synthase family. It depends on Zn(2+) as a cofactor.

It carries out the reaction 5-methyltetrahydropteroyltri-L-glutamate + L-homocysteine = tetrahydropteroyltri-L-glutamate + L-methionine. The protein operates within amino-acid biosynthesis; L-methionine biosynthesis via de novo pathway; L-methionine from L-homocysteine (MetE route): step 1/1. Its function is as follows. Catalyzes the transfer of a methyl group from 5-methyltetrahydrofolate to homocysteine resulting in methionine formation. The protein is 5-methyltetrahydropteroyltriglutamate--homocysteine methyltransferase of Hahella chejuensis (strain KCTC 2396).